A 644-amino-acid chain; its full sequence is UvrABC system protein C (644 aa).

The GIY-YIG domain maps to 47–125 (ARPGVYRMLD…IKRYRPPYNV (79 aa)). The UVR domain occupies 235–270 (TAVQKRLGEAMTRAADAMDFEQAAVLRDRLKALTFI).

This sequence belongs to the UvrC family. Interacts with UvrB in an incision complex.

It is found in the cytoplasm. Functionally, the UvrABC repair system catalyzes the recognition and processing of DNA lesions. UvrC both incises the 5' and 3' sides of the lesion. The N-terminal half is responsible for the 3' incision and the C-terminal half is responsible for the 5' incision. The polypeptide is UvrABC system protein C (Sphingopyxis alaskensis (strain DSM 13593 / LMG 18877 / RB2256) (Sphingomonas alaskensis)).